The sequence spans 227 residues: MILIEHILGNVKKDPVWRERLKGATFDFLVLDQREAQKSRCRKSSTQGLDLGISLDRNVVLADGDVLSWDEKTNVAVIVQINLRDVMVIDLRELKKRSADELIKTCFELGHALGNQHWKAVTKNNEVYVPLTVATTMMDSVMRTHGFQHLPFRFAKGAEILPLLSNSEARLLFGGAEESDTHVHVASPLDEPHGSGLHVHAIHSHGHSHSHDHDHDHNHDHDHKHKQ.

Residues 192–227 (PHGSGLHVHAIHSHGHSHSHDHDHDHNHDHDHKHKQ) form a disordered region. Positions 209-221 (HSHDHDHDHNHDH) are enriched in basic and acidic residues.

The protein belongs to the UreE family.

Its subcellular location is the cytoplasm. Its function is as follows. Involved in urease metallocenter assembly. Binds nickel. Probably functions as a nickel donor during metallocenter assembly. The sequence is that of Urease accessory protein UreE from Yersinia bercovieri.